The following is a 481-amino-acid chain: Halobacterial transducer protein 9 (481 aa).

The PAS domain occupies 10–81; sequence SPFTVPLLLN…NKVADTPIDA (72 aa). The Methyl-accepting transducer domain maps to 208-444; the sequence is DVERLEAASQ…EIAAMVDETA (237 aa).

Belongs to the methyl-accepting chemotaxis (MCP) protein family.

The protein resides in the cytoplasm. Functionally, potentially involved in chemo- or phototactic signal transduction. This is Halobacterial transducer protein 9 (htr9) from Halobacterium salinarum (strain ATCC 700922 / JCM 11081 / NRC-1) (Halobacterium halobium).